Here is a 344-residue protein sequence, read N- to C-terminus: Ribosomal RNA small subunit methyltransferase H 2 (344 aa).

S-adenosyl-L-methionine is bound by residues 78–80 (GGH), Asp-98, Phe-131, Asp-145, and Gln-152.

The protein belongs to the methyltransferase superfamily. RsmH family.

It is found in the cytoplasm. The enzyme catalyses cytidine(1402) in 16S rRNA + S-adenosyl-L-methionine = N(4)-methylcytidine(1402) in 16S rRNA + S-adenosyl-L-homocysteine + H(+). Specifically methylates the N4 position of cytidine in position 1402 (C1402) of 16S rRNA. This is Ribosomal RNA small subunit methyltransferase H 2 from Acholeplasma laidlawii (strain PG-8A).